A 239-amino-acid polypeptide reads, in one-letter code: tRNA (guanine-N(7)-)-methyltransferase (239 aa).

S-adenosyl-L-methionine is bound by residues E69, E94, D121, and D144. The active site involves D144. K148 is a binding site for substrate. An interaction with RNA region spans residues 150 to 155; that stretch reads RHNKRR. Residues D180 and 217-220 each bind substrate; that span reads TKFE.

It belongs to the class I-like SAM-binding methyltransferase superfamily. TrmB family. In terms of assembly, monomer.

The catalysed reaction is guanosine(46) in tRNA + S-adenosyl-L-methionine = N(7)-methylguanosine(46) in tRNA + S-adenosyl-L-homocysteine. It functions in the pathway tRNA modification; N(7)-methylguanine-tRNA biosynthesis. In terms of biological role, catalyzes the formation of N(7)-methylguanine at position 46 (m7G46) in tRNA. This chain is tRNA (guanine-N(7)-)-methyltransferase, found in Serratia proteamaculans (strain 568).